We begin with the raw amino-acid sequence, 126 residues long: Fatty acid-binding protein, liver (126 aa).

At Ala-2 the chain carries N-acetylalanine. Residues Lys-77, His-99, and Gln-101 each contribute to the cholate site.

Belongs to the calycin superfamily. Fatty-acid binding protein (FABP) family.

Its subcellular location is the cytoplasm. Functionally, binds free fatty acids and their coenzyme A derivatives, bilirubin, and some other small molecules in the cytoplasm. May be involved in intracellular lipid transport. The protein is Fatty acid-binding protein, liver (fabp1) of Aquarana catesbeiana (American bullfrog).